The following is a 483-amino-acid chain: MLTLDTLNVMLAVSEEGLIEEMIIALLASPQLAVFFEKFPRLKAAITDDVPRWREALRSRLKDARVPPELTEEVMCYQQSQLLSTPQFIVQLPQILDLLHRLNSPWAEQARQLVDANSTITSALHTLFLQRWRLSLIVQATTLNQQLLEEEREQLLSEVQERMTLSGQLEPILADNNTAAGRLWDMSAGQLKRGDYQLIVKYGEFLNEQPELKRLAEQLGRSREAKSIPRNDAQMETFRTMVREPATVPEQVDGLQQSDDILRLLPPELATLGITELEYEFYRRLVEKQLLTYRLHGESWREKMIERPVVHKDYDEQPRGPFIVCVDTSGSMGGFNEQCAKAFCLALMRIALAENRRCYIMLFSTEIVRYELSGPQGIEQAIRFLSQQFRGGTDLASCFRAIMERLQSREWFDADAVVISDFIAQRLPDDVTSKVKELQRVHQHRFHAVAMSAHGKPGIMRIFDHIWRFDTGMRSRLLRRWRR.

It belongs to the ViaA family. As to quaternary structure, homodimer. Interacts with RavA.

Its subcellular location is the cytoplasm. Component of the RavA-ViaA chaperone complex, which may act on the membrane to optimize the function of some of the respiratory chains. ViaA stimulates the ATPase activity of RavA. This is Regulatory protein ViaA from Escherichia coli O1:K1 / APEC.